The following is a 330-amino-acid chain: Ketol-acid reductoisomerase (NADP(+)) (330 aa).

Residues 1–181 (MKVFYDSDFK…GLSRAGVIQT (181 aa)) enclose the KARI N-terminal Rossmann domain. Residues 24–27 (YGSQ), R47, S52, and 82–85 (DELQ) each bind NADP(+). Residue H107 is part of the active site. G133 lines the NADP(+) pocket. In terms of domain architecture, KARI C-terminal knotted spans 182-327 (TFKEETETDL…AKLRKMCGLE (146 aa)). Positions 190, 194, 226, and 230 each coordinate Mg(2+). Residue S251 participates in substrate binding.

This sequence belongs to the ketol-acid reductoisomerase family. Requires Mg(2+) as cofactor.

The enzyme catalyses (2R)-2,3-dihydroxy-3-methylbutanoate + NADP(+) = (2S)-2-acetolactate + NADPH + H(+). It catalyses the reaction (2R,3R)-2,3-dihydroxy-3-methylpentanoate + NADP(+) = (S)-2-ethyl-2-hydroxy-3-oxobutanoate + NADPH + H(+). Its pathway is amino-acid biosynthesis; L-isoleucine biosynthesis; L-isoleucine from 2-oxobutanoate: step 2/4. It participates in amino-acid biosynthesis; L-valine biosynthesis; L-valine from pyruvate: step 2/4. In terms of biological role, involved in the biosynthesis of branched-chain amino acids (BCAA). Catalyzes an alkyl-migration followed by a ketol-acid reduction of (S)-2-acetolactate (S2AL) to yield (R)-2,3-dihydroxy-isovalerate. In the isomerase reaction, S2AL is rearranged via a Mg-dependent methyl migration to produce 3-hydroxy-3-methyl-2-ketobutyrate (HMKB). In the reductase reaction, this 2-ketoacid undergoes a metal-dependent reduction by NADPH to yield (R)-2,3-dihydroxy-isovalerate. The protein is Ketol-acid reductoisomerase (NADP(+)) of Methanococcus maripaludis (strain C7 / ATCC BAA-1331).